Reading from the N-terminus, the 444-residue chain is Exodeoxyribonuclease 7 large subunit (444 aa).

This sequence belongs to the XseA family. As to quaternary structure, heterooligomer composed of large and small subunits.

It is found in the cytoplasm. It carries out the reaction Exonucleolytic cleavage in either 5'- to 3'- or 3'- to 5'-direction to yield nucleoside 5'-phosphates.. Functionally, bidirectionally degrades single-stranded DNA into large acid-insoluble oligonucleotides, which are then degraded further into small acid-soluble oligonucleotides. This is Exodeoxyribonuclease 7 large subunit from Pseudoalteromonas translucida (strain TAC 125).